Here is a 334-residue protein sequence, read N- to C-terminus: MDERLVSSEADNHESVIEQSLRPQNLAQYIGQHKVKENLRVFIDAAKMRQETLDHVLLYGPPGLGKTTLASIVANEMGVELRTTSGPAIERPGDLAAILTALEPGDVLFIDEIHRLHRSIEEVLYPAMEDFCLDIVIGKGPSARSVRLDLPPFTLVGATTRVGLLTAPLRDRFGVMSRLEYYTQEELADIVTRTADVFEVEIDKPSALEIARRSRGTPRVANRLLRRVRDFAQVLGDSRITEDISQNALERLQVDRLGLDHIDHKLLMGMIEKFNGGPVGLDTISATIGEESHTIEDVYEPYLLQIGFIQRTPRGRIVTPAVYHHFQMEAPRYD.

Positions 1–182 (MDERLVSSEA…FGVMSRLEYY (182 aa)) are large ATPase domain (RuvB-L). ATP-binding positions include Leu-21, Arg-22, Gly-63, Lys-66, Thr-67, Thr-68, 129 to 131 (EDF), Arg-172, Tyr-182, and Arg-219. Thr-67 contributes to the Mg(2+) binding site. The small ATPAse domain (RuvB-S) stretch occupies residues 183–253 (TQEELADIVT…ISQNALERLQ (71 aa)). The head domain (RuvB-H) stretch occupies residues 256–334 (RLGLDHIDHK…HFQMEAPRYD (79 aa)). Residues Arg-311 and Arg-316 each contribute to the DNA site.

This sequence belongs to the RuvB family. As to quaternary structure, homohexamer. Forms an RuvA(8)-RuvB(12)-Holliday junction (HJ) complex. HJ DNA is sandwiched between 2 RuvA tetramers; dsDNA enters through RuvA and exits via RuvB. An RuvB hexamer assembles on each DNA strand where it exits the tetramer. Each RuvB hexamer is contacted by two RuvA subunits (via domain III) on 2 adjacent RuvB subunits; this complex drives branch migration. In the full resolvosome a probable DNA-RuvA(4)-RuvB(12)-RuvC(2) complex forms which resolves the HJ. Homohexamer which interacts with RecU.

It localises to the cytoplasm. It carries out the reaction ATP + H2O = ADP + phosphate + H(+). The RuvA-RuvB-RuvC complex processes Holliday junction (HJ) DNA during genetic recombination and DNA repair, while the RuvA-RuvB complex plays an important role in the rescue of blocked DNA replication forks via replication fork reversal (RFR). RuvA specifically binds to HJ cruciform DNA, conferring on it an open structure. The RuvB hexamer acts as an ATP-dependent pump, pulling dsDNA into and through the RuvAB complex. RuvB forms 2 homohexamers on either side of HJ DNA bound by 1 or 2 RuvA tetramers; 4 subunits per hexamer contact DNA at a time. Coordinated motions by a converter formed by DNA-disengaged RuvB subunits stimulates ATP hydrolysis and nucleotide exchange. Immobilization of the converter enables RuvB to convert the ATP-contained energy into a lever motion, pulling 2 nucleotides of DNA out of the RuvA tetramer per ATP hydrolyzed, thus driving DNA branch migration. The RuvB motors rotate together with the DNA substrate, which together with the progressing nucleotide cycle form the mechanistic basis for DNA recombination by continuous HJ branch migration. Branch migration allows RuvC to scan DNA until it finds its consensus sequence, where it cleaves and resolves cruciform DNA. In Bacillus subtilis (strain 168), this protein is Holliday junction branch migration complex subunit RuvB.